Consider the following 409-residue polypeptide: LL-diaminopimelate aminotransferase (409 aa).

The substrate site is built by Y15 and G42. Pyridoxal 5'-phosphate contacts are provided by residues Y72, 108–109, Y132, N187, Y218, and 246–248; these read SK and SFS. Substrate contacts are provided by K109, Y132, and N187. K249 carries the N6-(pyridoxal phosphate)lysine modification. Residues R257 and N292 each coordinate pyridoxal 5'-phosphate. 2 residues coordinate substrate: N292 and R388.

This sequence belongs to the class-I pyridoxal-phosphate-dependent aminotransferase family. LL-diaminopimelate aminotransferase subfamily. As to quaternary structure, homodimer. Pyridoxal 5'-phosphate is required as a cofactor.

It catalyses the reaction (2S,6S)-2,6-diaminopimelate + 2-oxoglutarate = (S)-2,3,4,5-tetrahydrodipicolinate + L-glutamate + H2O + H(+). It participates in amino-acid biosynthesis; L-lysine biosynthesis via DAP pathway; LL-2,6-diaminopimelate from (S)-tetrahydrodipicolinate (aminotransferase route): step 1/1. Functionally, involved in the synthesis of meso-diaminopimelate (m-DAP or DL-DAP), required for both lysine and peptidoglycan biosynthesis. Catalyzes the direct conversion of tetrahydrodipicolinate to LL-diaminopimelate. The polypeptide is LL-diaminopimelate aminotransferase (Heliobacterium modesticaldum (strain ATCC 51547 / Ice1)).